A 167-amino-acid polypeptide reads, in one-letter code: MEPLVETVIEDGRWEELDLPALATRAAEATLAALDMPAEGFTLVVMGCDDARIAELNGAFRQKGKPTNVLSWPSEERASEEPGMAPEPPEPGDPEDPEPLGDVAIAFETCQREAAEQGKPVTDHVTHLLVHGVLHLLGYDHVEEADGDLMEATETRILAGLGVPDPY.

The interval 64–101 (GKPTNVLSWPSEERASEEPGMAPEPPEPGDPEDPEPLG) is disordered. The span at 90 to 99 (EPGDPEDPEP) shows a compositional bias: acidic residues. Residues H131, H135, and H141 each coordinate Zn(2+).

Belongs to the endoribonuclease YbeY family. It depends on Zn(2+) as a cofactor.

It is found in the cytoplasm. In terms of biological role, single strand-specific metallo-endoribonuclease involved in late-stage 70S ribosome quality control and in maturation of the 3' terminus of the 16S rRNA. This Cereibacter sphaeroides (strain ATCC 17023 / DSM 158 / JCM 6121 / CCUG 31486 / LMG 2827 / NBRC 12203 / NCIMB 8253 / ATH 2.4.1.) (Rhodobacter sphaeroides) protein is Endoribonuclease YbeY.